The following is a 378-amino-acid chain: uncharacterized protein (378 aa).

Zn(2+)-binding residues include C38, H60, C90, C93, C96, and C104.

Belongs to the zinc-containing alcohol dehydrogenase family. Class-III subfamily. Zn(2+) serves as cofactor.

This is an uncharacterized protein from Bacillus subtilis (strain 168).